A 92-amino-acid polypeptide reads, in one-letter code: Small ribosomal subunit protein uS19 (92 aa).

The protein belongs to the universal ribosomal protein uS19 family.

Protein S19 forms a complex with S13 that binds strongly to the 16S ribosomal RNA. The protein is Small ribosomal subunit protein uS19 of Wigglesworthia glossinidia brevipalpis.